Consider the following 400-residue polypeptide: tRNA(Met) cytidine acetate ligase (400 aa).

ATP-binding positions include 7–20 (ITEY…HIYH), Gly-102, Asn-165, and Arg-190.

This sequence belongs to the TmcAL family.

It localises to the cytoplasm. The enzyme catalyses cytidine(34) in elongator tRNA(Met) + acetate + ATP = N(4)-acetylcytidine(34) in elongator tRNA(Met) + AMP + diphosphate. Functionally, catalyzes the formation of N(4)-acetylcytidine (ac(4)C) at the wobble position of elongator tRNA(Met), using acetate and ATP as substrates. First activates an acetate ion to form acetyladenylate (Ac-AMP) and then transfers the acetyl group to tRNA to form ac(4)C34. This Clostridium novyi (strain NT) protein is tRNA(Met) cytidine acetate ligase.